The following is a 382-amino-acid chain: Probable protein phosphatase 2C 65 (382 aa).

Positions 47-337 constitute a PPM-type phosphatase domain; that stretch reads HVSMSIKQGK…DDCAVVVLYL (291 aa). Residues aspartate 83 and glycine 84 each coordinate Mn(2+). Positions 107 to 126 are disordered; it reads KIRSSKSAGDENIENNSSQS. Aspartate 282 and aspartate 328 together coordinate Mn(2+).

The protein belongs to the PP2C family. The cofactor is Mg(2+). Mn(2+) is required as a cofactor.

The catalysed reaction is O-phospho-L-seryl-[protein] + H2O = L-seryl-[protein] + phosphate. It carries out the reaction O-phospho-L-threonyl-[protein] + H2O = L-threonyl-[protein] + phosphate. In Arabidopsis thaliana (Mouse-ear cress), this protein is Probable protein phosphatase 2C 65.